We begin with the raw amino-acid sequence, 230 residues long: MKDVILRKIKNNLVVSCQAVGEETLNNDIAITLMAKACLEGGAKVLRLSQYSHIKSIKSISGKTPIIGLIKSNYENSEVIITPSIKEVDLLLSLNVDCIAIDATNRKRPSETLEVIFKYCREKSPNTLLMADCATIDDVKNADKLGFDLIGTTLRGYTKETFGKSNMDNDYSFIKECLSSIKTPLIAEGGIWEPYQVKDLLDLGCFAVVVGSAITRPKEITKYFLKALDN.

This sequence belongs to the NanE family.

The catalysed reaction is an N-acyl-D-glucosamine 6-phosphate = an N-acyl-D-mannosamine 6-phosphate. Its pathway is amino-sugar metabolism; N-acetylneuraminate degradation; D-fructose 6-phosphate from N-acetylneuraminate: step 3/5. In terms of biological role, converts N-acetylmannosamine-6-phosphate (ManNAc-6-P) to N-acetylglucosamine-6-phosphate (GlcNAc-6-P). This is Putative N-acetylmannosamine-6-phosphate 2-epimerase from Malacoplasma penetrans (strain HF-2) (Mycoplasma penetrans).